A 217-amino-acid chain; its full sequence is Thymidylate kinase (217 aa).

G7–S14 contacts ATP.

Belongs to the thymidylate kinase family.

The enzyme catalyses dTMP + ATP = dTDP + ADP. Functionally, phosphorylation of dTMP to form dTDP in both de novo and salvage pathways of dTTP synthesis. The protein is Thymidylate kinase of Chlorobaculum parvum (strain DSM 263 / NCIMB 8327) (Chlorobium vibrioforme subsp. thiosulfatophilum).